The primary structure comprises 508 residues: Protein FAM227B (508 aa).

Disordered regions lie at residues 1–22 (MAGQ…MQEP) and 485–508 (ASLS…EEEY). Residues 486–497 (SLSSSSSSSPSS) are compositionally biased toward low complexity.

This sequence belongs to the FAM227 family.

The sequence is that of Protein FAM227B (FAM227B) from Homo sapiens (Human).